The chain runs to 59 residues: U17-myrmicitoxin-Tb1f (59 aa).

Residues 1–27 (MEKNRTTTFSVYLTIILFLISTFITMV) form the signal peptide. The propeptide occupies 28–31 (ITES). A Histidine amide modification is found at H58.

In terms of tissue distribution, expressed by the venom gland.

The protein localises to the secreted. This is U17-myrmicitoxin-Tb1f from Tetramorium bicarinatum (Tramp ant).